A 202-amino-acid polypeptide reads, in one-letter code: MARYRGAKLRITRRLGDLPGLTSKIAKRTSRPGQHGAVQKKPTQYGIRLEEKQKLRFNYGISEKQLMNYIRQAKGIKGTTGTILLQLLEMRLDNLIFRLGLAPTIAAARQLVSHKHIQVNNTRVSIPSYQCQPGDVLSVRDNAASKSLVNTYLESPSLSQSPQHLDFDKKNLTAKVLGIVDREWVALKLNELFVIEYYSRKI.

The region spanning 90–152 (MRLDNLIFRL…AASKSLVNTY (63 aa)) is the S4 RNA-binding domain.

Belongs to the universal ribosomal protein uS4 family. In terms of assembly, part of the 30S ribosomal subunit. Contacts protein S5. The interaction surface between S4 and S5 is involved in control of translational fidelity.

It is found in the plastid. Its subcellular location is the chloroplast. Its function is as follows. One of the primary rRNA binding proteins, it binds directly to 16S rRNA where it nucleates assembly of the body of the 30S subunit. With S5 and S12 plays an important role in translational accuracy. The sequence is that of Small ribosomal subunit protein uS4c (rps4) from Emiliania huxleyi (Coccolithophore).